The chain runs to 149 residues: Probable calcium-binding protein CML25/26 (149 aa).

EF-hand domains follow at residues 1 to 35 (MASSASSVFAAFDKDGDGKVSASELRGCMAAALGE), 37 to 72 (VSEEEAAAILATADTDGDGLLDHHEFMRLSAAHQLQ), 77 to 113 (ESLRCLREAFDMYAEEEETAVITPASLRRMLRRLGSE), and 117 to 149 (LEMEECRAMICRFDLNGDGVLSFDEFRVMMLMA). Aspartate 13, aspartate 15, aspartate 17, lysine 19, glutamate 24, aspartate 50, aspartate 52, aspartate 54, and glutamate 61 together coordinate Ca(2+). Aspartate 130, asparagine 132, aspartate 134, and glutamate 141 together coordinate Ca(2+).

In terms of biological role, potential calcium sensor. The sequence is that of Probable calcium-binding protein CML25/26 (CML25) from Oryza sativa subsp. japonica (Rice).